Here is a 432-residue protein sequence, read N- to C-terminus: Adenylosuccinate synthetase (432 aa).

GTP-binding positions include Gly-13 to Lys-19 and Gly-41 to Thr-43. Asp-14 acts as the Proton acceptor in catalysis. Residues Asp-14 and Gly-41 each coordinate Mg(2+). Residues Asp-14–Lys-17, Asn-39–His-42, Thr-131, Arg-145, Gln-226, Thr-241, and Arg-305 each bind IMP. The active-site Proton donor is the His-42. A substrate-binding site is contributed by Ser-301–Arg-307. GTP is bound by residues Arg-307, Lys-333–Asp-335, and Ser-416–Gly-418.

Belongs to the adenylosuccinate synthetase family. As to quaternary structure, homodimer. The cofactor is Mg(2+).

The protein localises to the cytoplasm. It carries out the reaction IMP + L-aspartate + GTP = N(6)-(1,2-dicarboxyethyl)-AMP + GDP + phosphate + 2 H(+). It participates in purine metabolism; AMP biosynthesis via de novo pathway; AMP from IMP: step 1/2. In terms of biological role, plays an important role in the de novo pathway of purine nucleotide biosynthesis. Catalyzes the first committed step in the biosynthesis of AMP from IMP. This is Adenylosuccinate synthetase from Neisseria meningitidis serogroup B (strain ATCC BAA-335 / MC58).